Consider the following 620-residue polypeptide: Probable potassium transport system protein Kup (620 aa).

12 helical membrane-spanning segments follow: residues Val-8 to Tyr-28, Val-50 to Ile-70, Met-102 to Ile-122, Pro-136 to Ile-156, Phe-168 to Val-188, Leu-211 to Tyr-231, Trp-246 to Ile-266, Met-284 to Ile-304, Ile-336 to Phe-356, Ile-368 to Leu-388, Met-393 to Ala-413, and Ile-415 to Val-435.

Belongs to the HAK/KUP transporter (TC 2.A.72) family.

The protein resides in the cell inner membrane. The catalysed reaction is K(+)(in) + H(+)(in) = K(+)(out) + H(+)(out). Transport of potassium into the cell. Likely operates as a K(+):H(+) symporter. This is Probable potassium transport system protein Kup from Rhodopseudomonas palustris (strain HaA2).